The following is a 1571-amino-acid chain: Phosphatidylinositol 3-kinase 1 (1571 aa).

The span at 1–73 shows a compositional bias: low complexity; the sequence is MNSIESSSND…NNDNNNNNNN (73 aa). 3 disordered regions span residues 1 to 119, 157 to 195, and 283 to 430; these read MNSI…HVNN, GYDVNSNNNNNNGGGSSSGSSSGGSDESASNQPIIRTRN, and NSKL…IIKR. Residues 74-85 are compositionally biased toward basic and acidic residues; it reads IDKKRKDSKNKQ. Low complexity predominate over residues 101-119; sequence NSNDSNCSSGSSSGGHVNN. The span at 283–292 shows a compositional bias: basic and acidic residues; that stretch reads NSKLDTEEKP. Low complexity predominate over residues 294–324; the sequence is TTTTTTTTTSTSISTSTPTTTTTTTTNTSTT. The segment covering 325–337 has biased composition (polar residues); it reads NDITIKPKTSPTK. 2 stretches are compositionally biased toward low complexity: residues 360–382 and 405–424; these read KVSTPKSNNTSKKTSSDTTPTGK and NNTNNTSSNNNNNNNNNNNN. The region spanning 530 to 627 is the PI3K-ABD domain; it reads IKTSFNILFL…IPKLKVIEKS (98 aa). Residues 700–789 form the PI3K-RBD domain; the sequence is GNKILISIFL…GTKPQLTLIQ (90 aa). Residues 851 to 1020 form the C2 PI3K-type domain; that stretch reads IKKPFRVKVM…GLTLEFEEFN (170 aa). In terms of domain architecture, PIK helical spans 1040–1216; it reads QPPTNINSNE…GILLESYLYA (177 aa). The region spanning 1280–1558 is the PI3K/PI4K catalytic domain; the sequence is IINKSKYMDS…LIHESLATKT (279 aa). The tract at residues 1286-1292 is G-loop; it reads YMDSKKL. The catalytic loop stretch occupies residues 1424–1432; sequence GIGDRHNDN. The tract at residues 1443–1469 is activation loop; the sequence is HIDFGHFLGNYKKKFGFKRERAPFVFT.

Belongs to the PI3/PI4-kinase family.

It catalyses the reaction a 1,2-diacyl-sn-glycero-3-phospho-(1D-myo-inositol) + ATP = a 1,2-diacyl-sn-glycero-3-phospho-(1D-myo-inositol-3-phosphate) + ADP + H(+). This Dictyostelium discoideum (Social amoeba) protein is Phosphatidylinositol 3-kinase 1 (pikA).